The sequence spans 614 residues: Methionine--tRNA ligase (614 aa).

Residues proline 11 to histidine 21 carry the 'HIGH' region motif. Zn(2+) is bound by residues cysteine 143, cysteine 146, cysteine 156, and cysteine 159. The 'KMSKS' region signature appears at glutamine 359–serine 363. Threonine 362 is an ATP binding site.

This sequence belongs to the class-I aminoacyl-tRNA synthetase family. MetG type 1 subfamily. Monomer. Requires Zn(2+) as cofactor.

It localises to the cytoplasm. It carries out the reaction tRNA(Met) + L-methionine + ATP = L-methionyl-tRNA(Met) + AMP + diphosphate. In terms of biological role, is required not only for elongation of protein synthesis but also for the initiation of all mRNA translation through initiator tRNA(fMet) aminoacylation. The protein is Methionine--tRNA ligase of Beutenbergia cavernae (strain ATCC BAA-8 / DSM 12333 / CCUG 43141 / JCM 11478 / NBRC 16432 / NCIMB 13614 / HKI 0122).